Consider the following 360-residue polypeptide: DNA replication and repair protein RecF (360 aa).

30 to 37 (GQNGSGKT) serves as a coordination point for ATP.

It belongs to the RecF family.

Its subcellular location is the cytoplasm. In terms of biological role, the RecF protein is involved in DNA metabolism; it is required for DNA replication and normal SOS inducibility. RecF binds preferentially to single-stranded, linear DNA. It also seems to bind ATP. The polypeptide is DNA replication and repair protein RecF (Shewanella sp. (strain MR-4)).